The sequence spans 289 residues: Shikimate dehydrogenase (NADP(+)) (289 aa).

Residues 22 to 24 (SRS) and T69 contribute to the shikimate site. K73 functions as the Proton acceptor in the catalytic mechanism. An NADP(+)-binding site is contributed by E85. Shikimate contacts are provided by N94 and D109. Residues 134–138 (GAGGA), 158–163 (NRTLSR), and I226 contribute to the NADP(+) site. Position 228 (Y228) interacts with shikimate. G249 provides a ligand contact to NADP(+).

It belongs to the shikimate dehydrogenase family. Homodimer.

The enzyme catalyses shikimate + NADP(+) = 3-dehydroshikimate + NADPH + H(+). It participates in metabolic intermediate biosynthesis; chorismate biosynthesis; chorismate from D-erythrose 4-phosphate and phosphoenolpyruvate: step 4/7. In terms of biological role, involved in the biosynthesis of the chorismate, which leads to the biosynthesis of aromatic amino acids. Catalyzes the reversible NADPH linked reduction of 3-dehydroshikimate (DHSA) to yield shikimate (SA). The polypeptide is Shikimate dehydrogenase (NADP(+)) (Brucella melitensis biotype 2 (strain ATCC 23457)).